The primary structure comprises 138 residues: Acidic phospholipase A2 2 (138 aa).

An N-terminal signal peptide occupies residues 1 to 16 (MRTLWIVAVWLTGVEG). Cystine bridges form between cysteine 42/cysteine 131, cysteine 44/cysteine 60, cysteine 59/cysteine 111, cysteine 65/cysteine 138, cysteine 66/cysteine 104, cysteine 73/cysteine 97, and cysteine 91/cysteine 102. Ca(2+) is bound by residues tyrosine 43, glycine 45, and glycine 47. The active site involves histidine 63. Aspartate 64 provides a ligand contact to Ca(2+). Residue aspartate 105 is part of the active site.

In terms of assembly, monomer. Ca(2+) is required as a cofactor. In terms of tissue distribution, expressed by the venom gland.

Its subcellular location is the secreted. The enzyme catalyses a 1,2-diacyl-sn-glycero-3-phosphocholine + H2O = a 1-acyl-sn-glycero-3-phosphocholine + a fatty acid + H(+). Functionally, snake venom phospholipase that inhibits ADP- and collagen-induced human platelet aggregation. This inhibition is completely inhibited by abolition of catalytic activity in case of collagen as inducer and partially inhibited in case of ADP as inducer. PLA2 catalyzes the calcium-dependent hydrolysis of the 2-acyl groups in 3-sn-phosphoglycerides. This is Acidic phospholipase A2 2 from Macrovipera lebetinus (Levantine viper).